We begin with the raw amino-acid sequence, 196 residues long: ATP-dependent Clp protease proteolytic subunit (196 aa).

The active-site Nucleophile is the Ser-98. His-123 is a catalytic residue.

The protein belongs to the peptidase S14 family. In terms of assembly, fourteen ClpP subunits assemble into 2 heptameric rings which stack back to back to give a disk-like structure with a central cavity, resembling the structure of eukaryotic proteasomes.

The protein localises to the cytoplasm. It carries out the reaction Hydrolysis of proteins to small peptides in the presence of ATP and magnesium. alpha-casein is the usual test substrate. In the absence of ATP, only oligopeptides shorter than five residues are hydrolyzed (such as succinyl-Leu-Tyr-|-NHMec, and Leu-Tyr-Leu-|-Tyr-Trp, in which cleavage of the -Tyr-|-Leu- and -Tyr-|-Trp bonds also occurs).. Its function is as follows. Cleaves peptides in various proteins in a process that requires ATP hydrolysis. Has a chymotrypsin-like activity. Plays a major role in the degradation of misfolded proteins. ClpXP is involved in the complete degradation of the Site-2 clipped anti-sigma-W factor RsiW. This results in the release of SigW and the transcription activation of the genes under the control of the sigma-W factor. The sequence is that of ATP-dependent Clp protease proteolytic subunit from Geobacillus kaustophilus (strain HTA426).